The chain runs to 339 residues: Ketol-acid reductoisomerase (NADP(+)) (339 aa).

Residues 1 to 182 (MRVYYDRDAD…GGGRAGIIET (182 aa)) form the KARI N-terminal Rossmann domain. NADP(+) contacts are provided by residues 24 to 27 (YGSQ), Arg-48, Ser-51, Ser-53, and 83 to 86 (DELQ). His-108 is a catalytic residue. Gly-134 lines the NADP(+) pocket. The KARI C-terminal knotted domain maps to 183–328 (SFREETETDL…ARLRDMMPWI (146 aa)). Positions 191, 195, 227, and 231 each coordinate Mg(2+). Position 252 (Ser-252) interacts with substrate.

This sequence belongs to the ketol-acid reductoisomerase family. Mg(2+) is required as a cofactor.

It carries out the reaction (2R)-2,3-dihydroxy-3-methylbutanoate + NADP(+) = (2S)-2-acetolactate + NADPH + H(+). It catalyses the reaction (2R,3R)-2,3-dihydroxy-3-methylpentanoate + NADP(+) = (S)-2-ethyl-2-hydroxy-3-oxobutanoate + NADPH + H(+). The protein operates within amino-acid biosynthesis; L-isoleucine biosynthesis; L-isoleucine from 2-oxobutanoate: step 2/4. Its pathway is amino-acid biosynthesis; L-valine biosynthesis; L-valine from pyruvate: step 2/4. Functionally, involved in the biosynthesis of branched-chain amino acids (BCAA). Catalyzes an alkyl-migration followed by a ketol-acid reduction of (S)-2-acetolactate (S2AL) to yield (R)-2,3-dihydroxy-isovalerate. In the isomerase reaction, S2AL is rearranged via a Mg-dependent methyl migration to produce 3-hydroxy-3-methyl-2-ketobutyrate (HMKB). In the reductase reaction, this 2-ketoacid undergoes a metal-dependent reduction by NADPH to yield (R)-2,3-dihydroxy-isovalerate. The chain is Ketol-acid reductoisomerase (NADP(+)) from Afipia carboxidovorans (strain ATCC 49405 / DSM 1227 / KCTC 32145 / OM5) (Oligotropha carboxidovorans).